The primary structure comprises 248 residues: tRNA pseudouridine synthase A (248 aa).

Asp-53 serves as the catalytic Nucleophile. Tyr-111 is a substrate binding site.

It belongs to the tRNA pseudouridine synthase TruA family. In terms of assembly, homodimer.

It carries out the reaction uridine(38/39/40) in tRNA = pseudouridine(38/39/40) in tRNA. Functionally, formation of pseudouridine at positions 38, 39 and 40 in the anticodon stem and loop of transfer RNAs. The sequence is that of tRNA pseudouridine synthase A from Listeria monocytogenes serovar 1/2a (strain ATCC BAA-679 / EGD-e).